A 205-amino-acid polypeptide reads, in one-letter code: NADH-quinone oxidoreductase subunit C (205 aa).

Belongs to the complex I 30 kDa subunit family. As to quaternary structure, NDH-1 is composed of 14 different subunits. Subunits NuoB, C, D, E, F, and G constitute the peripheral sector of the complex.

It is found in the cell inner membrane. The enzyme catalyses a quinone + NADH + 5 H(+)(in) = a quinol + NAD(+) + 4 H(+)(out). NDH-1 shuttles electrons from NADH, via FMN and iron-sulfur (Fe-S) centers, to quinones in the respiratory chain. The immediate electron acceptor for the enzyme in this species is believed to be ubiquinone. Couples the redox reaction to proton translocation (for every two electrons transferred, four hydrogen ions are translocated across the cytoplasmic membrane), and thus conserves the redox energy in a proton gradient. The protein is NADH-quinone oxidoreductase subunit C of Bartonella bacilliformis (strain ATCC 35685 / KC583 / Herrer 020/F12,63).